The sequence spans 167 residues: Ion-translocating oxidoreductase complex subunit B (167 aa).

Positions 1–22 are hydrophobic; the sequence is MITLIIFSFLSFLLGIILSFTA. The 4Fe-4S domain maps to 28–87; it reads QEDPIVAIVNELLPQSQCAQCGYSGCYPYAKAIVENSEKINKCIPGGTDLISAISSVLSI. Positions 45, 48, 53, 70, 113, 116, 119, 123, 143, 146, 149, and 153 each coordinate [4Fe-4S] cluster. 2 consecutive 4Fe-4S ferredoxin-type domains span residues 104 to 133 and 134 to 163; these read NTVL…GAPN and FIHT…IKKE.

This sequence belongs to the 4Fe4S bacterial-type ferredoxin family. RnfB subfamily. In terms of assembly, the complex is composed of six subunits: RnfA, RnfB, RnfC, RnfD, RnfE and RnfG. [4Fe-4S] cluster serves as cofactor.

The protein localises to the cell inner membrane. Part of a membrane-bound complex that couples electron transfer with translocation of ions across the membrane. In Buchnera aphidicola subsp. Acyrthosiphon pisum (strain 5A), this protein is Ion-translocating oxidoreductase complex subunit B.